The following is a 608-amino-acid chain: Threonine--tRNA ligase (608 aa).

The interval 1-144 (MRILLIHSDY…SRTITAEEEE (144 aa)) is editing domain. The segment at 195 to 489 (PHVKLMREKE…ELDEKAPMLP (295 aa)) is catalytic. Zn(2+) contacts are provided by Cys286, His338, and His459.

This sequence belongs to the class-II aminoacyl-tRNA synthetase family. Homodimer. It depends on Zn(2+) as a cofactor.

It localises to the cytoplasm. It carries out the reaction tRNA(Thr) + L-threonine + ATP = L-threonyl-tRNA(Thr) + AMP + diphosphate + H(+). Functionally, catalyzes the attachment of threonine to tRNA(Thr) in a two-step reaction: L-threonine is first activated by ATP to form Thr-AMP and then transferred to the acceptor end of tRNA(Thr). Also edits incorrectly charged L-seryl-tRNA(Thr). The sequence is that of Threonine--tRNA ligase from Methanobrevibacter smithii (strain ATCC 35061 / DSM 861 / OCM 144 / PS).